Reading from the N-terminus, the 472-residue chain is Chromosomal replication initiator protein DnaA (472 aa).

Positions 1–73 (MSNMEQDRWS…LSCWQAELPE (73 aa)) are domain I, interacts with DnaA modulators. The domain II stretch occupies residues 73–128 (EVNRVDLTVRSPVRCAAPAKEAPAPVESRRDEQRPSAERSNGATPVSANHDALGGS). The disordered stretch occupies residues 89-124 (APAKEAPAPVESRRDEQRPSAERSNGATPVSANHDA). Residues 99–109 (ESRRDEQRPSA) show a composition bias toward basic and acidic residues. The segment covering 110 to 119 (ERSNGATPVS) has biased composition (polar residues). Residues 129–351 (PLDPRLTFAS…GAINRLLAHS (223 aa)) form a domain III, AAA+ region region. 4 residues coordinate ATP: Gly176, Gly178, Lys179, and Thr180. A domain IV, binds dsDNA region spans residues 352–472 (KLNNQPVTLE…VESLKRQLQE (121 aa)).

This sequence belongs to the DnaA family. As to quaternary structure, oligomerizes as a right-handed, spiral filament on DNA at oriC.

The protein localises to the cytoplasm. In terms of biological role, plays an essential role in the initiation and regulation of chromosomal replication. ATP-DnaA binds to the origin of replication (oriC) to initiate formation of the DNA replication initiation complex once per cell cycle. Binds the DnaA box (a 9 base pair repeat at the origin) and separates the double-stranded (ds)DNA. Forms a right-handed helical filament on oriC DNA; dsDNA binds to the exterior of the filament while single-stranded (ss)DNA is stabiized in the filament's interior. The ATP-DnaA-oriC complex binds and stabilizes one strand of the AT-rich DNA unwinding element (DUE), permitting loading of DNA polymerase. After initiation quickly degrades to an ADP-DnaA complex that is not apt for DNA replication. Binds acidic phospholipids. This chain is Chromosomal replication initiator protein DnaA, found in Rhodopseudomonas palustris (strain TIE-1).